Reading from the N-terminus, the 470-residue chain is 3-isopropylmalate dehydratase large subunit (470 aa).

[4Fe-4S] cluster-binding residues include Cys-351, Cys-411, and Cys-414.

Belongs to the aconitase/IPM isomerase family. LeuC type 1 subfamily. As to quaternary structure, heterodimer of LeuC and LeuD. Requires [4Fe-4S] cluster as cofactor.

The enzyme catalyses (2R,3S)-3-isopropylmalate = (2S)-2-isopropylmalate. The protein operates within amino-acid biosynthesis; L-leucine biosynthesis; L-leucine from 3-methyl-2-oxobutanoate: step 2/4. In terms of biological role, catalyzes the isomerization between 2-isopropylmalate and 3-isopropylmalate, via the formation of 2-isopropylmaleate. This chain is 3-isopropylmalate dehydratase large subunit, found in Rhodopseudomonas palustris (strain BisB5).